The sequence spans 76 residues: MPTEGRRRGVSAAMIKHYLLMTLVCIPLALLYVCLEWFFGNTWVTVGVFFGVLVVLRLGLYLYRRSKGIRDGYLDE.

Helical transmembrane passes span 19–39 (LLMT…EWFF) and 43–63 (WVTV…LYLY).

Its subcellular location is the membrane. Functionally, immunity protein that plays a role in preventing early activation of toxin Tse5. The protein is Immune protein Tsi5 of Pseudomonas aeruginosa (strain ATCC 15692 / DSM 22644 / CIP 104116 / JCM 14847 / LMG 12228 / 1C / PRS 101 / PAO1).